Consider the following 190-residue polypeptide: Large ribosomal subunit protein uL5 (190 aa).

It belongs to the universal ribosomal protein uL5 family. As to quaternary structure, part of the 50S ribosomal subunit; contacts the 5S rRNA and probably tRNA. Forms a bridge to the 30S subunit in the 70S ribosome.

In terms of biological role, this is one of the proteins that bind and probably mediate the attachment of the 5S RNA into the large ribosomal subunit, where it forms part of the central protuberance. In the 70S ribosome it contacts protein S13 of the 30S subunit (bridge B1b), connecting the 2 subunits; this bridge is implicated in subunit movement. May contact the P site tRNA; the 5S rRNA and some of its associated proteins might help stabilize positioning of ribosome-bound tRNAs. The sequence is that of Large ribosomal subunit protein uL5 from Methanocaldococcus jannaschii (strain ATCC 43067 / DSM 2661 / JAL-1 / JCM 10045 / NBRC 100440) (Methanococcus jannaschii).